The sequence spans 642 residues: MPVITLPDGSQRHYDHAVSPMDVALDIGPGLAKACIAGRVNGELVDACDLIENDAQLSIITAKDEDGLEIIRHSCAHLLGHAIKQLWPHTKMAIGPVIDNGFYYDVDLDRTLTQEDVEALEKRMHELAEKNYDVIKKKVSWHEARETFANRGESYKVSILDENIAHDDKPGLYFHEEYVDMCRGPHVPNMRFCHHFKLMKTAGAYWRGDSNNKMLQRIYGTAWADKKALNAYLQRLEEAAKRDHRKIGKQLDLYHMQEEAPGMVFWHNDGWTIFRELEVFVRSKLKEYQYQEVKGPFMMDRVLWEKTGHWDNYKDAMFTTSSENREYCIKPMNCPGHVQIFNQGLKSYRDLPLRMAEFGSCHRNEPSGSLHGLMRVRGFTQDDAHIFCTEEQIRDEVNGCIRLVYDMYSTFGFEKIVVKLSTRPEKRIGSDEMWDRAEADLAVALEENNIPFEYQLGEGAFYGPKIEFTLYDCLDRAWQCGTVQLDFSLPSRLSASYVGEDNERKVPVMIHRAILGSMERFIGILTEEFAGFFPTWLAPVQVVIMNITDSQSDYVNELTQKLSNAGIRVKADLRNEKIGFKIREHTLRRVPYMLVCGDKEVESGKVAVRTRRGKDLGSMDVNEVIEKLQQEIRSRSLKQLEE.

The TGS domain maps to 1–61; sequence MPVITLPDGS…ENDAQLSIIT (61 aa). The interval 243-534 is catalytic; the sequence is DHRKIGKQLD…LTEEFAGFFP (292 aa). K286 is modified (N6-acetyllysine). Positions 334, 385, and 511 each coordinate Zn(2+).

It belongs to the class-II aminoacyl-tRNA synthetase family. As to quaternary structure, homodimer. Requires Zn(2+) as cofactor.

The protein resides in the cytoplasm. It carries out the reaction tRNA(Thr) + L-threonine + ATP = L-threonyl-tRNA(Thr) + AMP + diphosphate + H(+). Its function is as follows. Catalyzes the attachment of threonine to tRNA(Thr) in a two-step reaction: L-threonine is first activated by ATP to form Thr-AMP and then transferred to the acceptor end of tRNA(Thr). Also edits incorrectly charged L-seryl-tRNA(Thr). This is Threonine--tRNA ligase from Escherichia coli O9:H4 (strain HS).